The sequence spans 170 residues: Urease accessory protein UreE (170 aa).

It belongs to the UreE family.

The protein localises to the cytoplasm. Its function is as follows. Involved in urease metallocenter assembly. Binds nickel. Probably functions as a nickel donor during metallocenter assembly. The polypeptide is Urease accessory protein UreE (Helicobacter pylori (strain ATCC 700392 / 26695) (Campylobacter pylori)).